Here is a 131-residue protein sequence, read N- to C-terminus: MARNATSSRPRKKERKNISSGVAHVAATFNNTMITISDAQGNAIAWSSAGAQGFKGSRKSTPYAAQVAAEDAGRKAREHGMETLEIEVSGPGSGRESALRALQAVGFAITAIRDTTPIPHNGCRPRKRRRV.

Belongs to the universal ribosomal protein uS11 family. In terms of assembly, part of the 30S ribosomal subunit. Interacts with proteins S7 and S18. Binds to IF-3.

Its function is as follows. Located on the platform of the 30S subunit, it bridges several disparate RNA helices of the 16S rRNA. Forms part of the Shine-Dalgarno cleft in the 70S ribosome. The polypeptide is Small ribosomal subunit protein uS11 (Granulibacter bethesdensis (strain ATCC BAA-1260 / CGDNIH1)).